Here is a 456-residue protein sequence, read N- to C-terminus: Equilibrative nucleoside transporter 2 (456 aa).

Residues 1–12 (MAHGNAPRDSYH) are Cytoplasmic-facing. A helical transmembrane segment spans residues 13–29 (LVGISFFILGLGTLLPW). Residues 30–68 (NFFITAIPYFQGRLAGTNSSAETPSTNHTSPTDTFNFNN) lie on the Extracellular side of the membrane. Residues N47 and N56 are each glycosylated (N-linked (GlcNAc...) asparagine). A helical transmembrane segment spans residues 69–93 (WVTLLSQLPLLLFTLLNSFLYQCIP). At 94–97 (ESVR) the chain is on the cytoplasmic side. Residues 98 to 116 (ILGSLLAILLLFALTAALV) form a helical membrane-spanning segment. Topologically, residues 117–124 (KVDLSPGL) are extracellular. A helical transmembrane segment spans residues 125–143 (FFSITMASVWFINSFCAVL). The Cytoplasmic portion of the chain corresponds to 144–160 (QGSLFGQLGTMPSTYST). A helical membrane pass occupies residues 161 to 185 (LFLSGQGLAGIFAALAMLTSLASGV). Residues 186-192 (DPQTSAL) lie on the Extracellular side of the membrane. The chain crosses the membrane as a helical span at residues 193–213 (GYFITPCVGILLSIICYLSLP). The Cytoplasmic portion of the chain corresponds to 214 to 291 (HLKFARYYLT…VFVVFRKIWL (78 aa)). The residue at position 251 (S251) is a Phosphoserine. A helical transmembrane segment spans residues 292–311 (TALCLVLVFTVTLSVFPAIT). At 312-323 (AMVTTSSNSPGK) the chain is on the extracellular side. A helical membrane pass occupies residues 324 to 342 (WSQFFNPICCFLLFNVMDW). Topologically, residues 343–359 (LGRSLTSYFLWPDEDSQ) are cytoplasmic. A helical transmembrane segment spans residues 360-378 (LLPLLVCLRFLFVPLFMLC). Topologically, residues 379-393 (HVPQRARLPIIFWQD) are extracellular. The chain crosses the membrane as a helical span at residues 394-413 (AYFITFMLLFAISNGYFVSL). The Cytoplasmic segment spans residues 414–431 (TMCLAPRQVLPHEREVAG). A helical transmembrane segment spans residues 432–452 (ALMTFFLALGLSCGASLSFLF). Residues 453–456 (KALL) lie on the Extracellular side of the membrane.

The protein belongs to the SLC29A/ENT transporter (TC 2.A.57) family. Expressed in squeletal muscles. Expressed in testis at the blood-brain-barrier.

The protein localises to the apical cell membrane. Its subcellular location is the basolateral cell membrane. It carries out the reaction uridine(out) = uridine(in). The enzyme catalyses inosine(in) = inosine(out). It catalyses the reaction adenosine(in) = adenosine(out). The catalysed reaction is thymidine(in) = thymidine(out). It carries out the reaction hypoxanthine(out) = hypoxanthine(in). The enzyme catalyses adenine(out) = adenine(in). It catalyses the reaction cytidine(in) = cytidine(out). The catalysed reaction is thymine(out) = thymine(in). It carries out the reaction uracil(in) = uracil(out). The enzyme catalyses guanine(out) = guanine(in). It catalyses the reaction guanosine(in) = guanosine(out). Functionally, bidirectional uniporter involved in the facilitative transport of nucleosides and nucleobases, and contributes to maintaining their cellular homeostasis. Functions as a Na(+)-independent, passive transporter. Involved in the transport of nucleosides such as inosine, adenosine, uridine, thymidine, cytidine and guanosine. Also able to transport purine nucleobases (hypoxanthine, adenine, guanine) and pyrimidine nucleobases (thymine, uracil). Involved in nucleoside transport at basolateral membrane of kidney cells, allowing liver absorption of nucleoside metabolites. Mediates apical nucleoside uptake into Sertoli cells, thereby regulating the transport of nucleosides in testis across the blood-testis-barrier. Mediates both the influx and efflux of hypoxanthine in skeletal muscle microvascular endothelial cells to control the amount of intracellular hypoxanthine available for xanthine oxidase-mediated ROS production. In Rattus norvegicus (Rat), this protein is Equilibrative nucleoside transporter 2.